We begin with the raw amino-acid sequence, 473 residues long: Ribulose bisphosphate carboxylase large chain (473 aa).

2 residues coordinate substrate: Asn116 and Thr166. The Proton acceptor role is filled by Lys168. Lys170 is a binding site for substrate. Mg(2+) is bound by residues Lys194, Asp196, and Glu197. Lys194 bears the N6-carboxylysine mark. The active-site Proton acceptor is the His287. Residues Arg288, His320, and Ser372 each coordinate substrate.

This sequence belongs to the RuBisCO large chain family. Type I subfamily. Heterohexadecamer of 8 large chains and 8 small chains. It depends on Mg(2+) as a cofactor.

It carries out the reaction 2 (2R)-3-phosphoglycerate + 2 H(+) = D-ribulose 1,5-bisphosphate + CO2 + H2O. It catalyses the reaction D-ribulose 1,5-bisphosphate + O2 = 2-phosphoglycolate + (2R)-3-phosphoglycerate + 2 H(+). RuBisCO catalyzes two reactions: the carboxylation of D-ribulose 1,5-bisphosphate, the primary event in carbon dioxide fixation, as well as the oxidative fragmentation of the pentose substrate. Both reactions occur simultaneously and in competition at the same active site. This Hydrogenophaga pseudoflava (Pseudomonas carboxydoflava) protein is Ribulose bisphosphate carboxylase large chain.